We begin with the raw amino-acid sequence, 455 residues long: Ornithine decarboxylase (455 aa).

Residue lysine 67 is modified to N6-(pyridoxal phosphate)lysine. Residues serine 197, glycine 234, and 271 to 274 (EPGR) contribute to the pyridoxal 5'-phosphate site. Serine 297 is subject to Phosphoserine; by CK2. 325–326 (YD) provides a ligand contact to substrate. Cysteine 354 serves as the catalytic Proton donor; shared with dimeric partner. At cysteine 354 the chain carries S-nitrosocysteine. Aspartate 355 contributes to the substrate binding site. A pyridoxal 5'-phosphate-binding site is contributed by tyrosine 383.

The protein belongs to the Orn/Lys/Arg decarboxylase class-II family. As to quaternary structure, homodimer. Only the dimer is catalytically active, as the active sites are constructed of residues from both monomers. It depends on pyridoxal 5'-phosphate as a cofactor.

It catalyses the reaction L-ornithine + H(+) = putrescine + CO2. The protein operates within amine and polyamine biosynthesis; putrescine biosynthesis via L-ornithine pathway; putrescine from L-ornithine: step 1/1. Inhibited by antizymes (AZs) OAZ1, OAZ2 and OAZ3 in response to polyamine levels. AZs inhibit the assembly of the functional homodimer by binding to ODC monomers. Additionally, OAZ1 targets ODC monomers for ubiquitin-independent proteolytic destruction by the 26S proteasome. Its function is as follows. Catalyzes the first and rate-limiting step of polyamine biosynthesis that converts ornithine into putrescine, which is the precursor for the polyamines, spermidine and spermine. Polyamines are essential for cell proliferation and are implicated in cellular processes, ranging from DNA replication to apoptosis. This Cricetulus griseus (Chinese hamster) protein is Ornithine decarboxylase (ODC1).